The primary structure comprises 252 residues: Imidazole glycerol phosphate synthase subunit HisF (252 aa).

Residues Asp11 and Asp130 contribute to the active site.

This sequence belongs to the HisA/HisF family. In terms of assembly, heterodimer of HisH and HisF.

Its subcellular location is the cytoplasm. The catalysed reaction is 5-[(5-phospho-1-deoxy-D-ribulos-1-ylimino)methylamino]-1-(5-phospho-beta-D-ribosyl)imidazole-4-carboxamide + L-glutamine = D-erythro-1-(imidazol-4-yl)glycerol 3-phosphate + 5-amino-1-(5-phospho-beta-D-ribosyl)imidazole-4-carboxamide + L-glutamate + H(+). It functions in the pathway amino-acid biosynthesis; L-histidine biosynthesis; L-histidine from 5-phospho-alpha-D-ribose 1-diphosphate: step 5/9. In terms of biological role, IGPS catalyzes the conversion of PRFAR and glutamine to IGP, AICAR and glutamate. The HisF subunit catalyzes the cyclization activity that produces IGP and AICAR from PRFAR using the ammonia provided by the HisH subunit. This Bacillus anthracis (strain CDC 684 / NRRL 3495) protein is Imidazole glycerol phosphate synthase subunit HisF.